A 312-amino-acid polypeptide reads, in one-letter code: Very long chain fatty acid elongase 4 (312 aa).

Asparagine 20 carries N-linked (GlcNAc...) asparagine glycosylation. 7 helical membrane-spanning segments follow: residues 42-62 (LMQSPWPTISISTLYLLFVWL), 78-98 (VLIIYNFGMVLLNLFIFRELF), 127-147 (ALWWYFVSKGVEYLDTVFFIL), 165-185 (MFTLWWIGIKWVAGGQAFFGA), 188-208 (NSFIHVIMYSYYGLTAFGPWI), 217-237 (YLTMLQLVQFHVTIGHTALSL), and 246-266 (WMHWALIAYAISFIFLFLNFY). Over residues 273-292 (PKQSKTGKTATNGISSNGVN) the composition is skewed to polar residues. A disordered region spans residues 273–312 (PKQSKTGKTATNGISSNGVNKSEKALENGKPQKNGKPKGE). Asparagine 292 is a glycosylation site (N-linked (GlcNAc...) asparagine). Positions 308 to 312 (KPKGE) match the Di-lysine motif motif.

This sequence belongs to the ELO family. ELOVL4 subfamily. As to quaternary structure, oligomer. Post-translationally, N-glycosylated. In terms of tissue distribution, expressed in the retina, exclusively in photoreceptor cells and in the brain, skin, testis and lens.

It localises to the endoplasmic reticulum membrane. It carries out the reaction a very-long-chain acyl-CoA + malonyl-CoA + H(+) = a very-long-chain 3-oxoacyl-CoA + CO2 + CoA. The catalysed reaction is hexacosanoyl-CoA + malonyl-CoA + H(+) = 3-oxooctacosanyol-CoA + CO2 + CoA. It catalyses the reaction octacosanoyl-CoA + malonyl-CoA + H(+) = 3-oxo-triacontanoyl-CoA + CO2 + CoA. The enzyme catalyses triacontanoyl-CoA + malonyl-CoA + H(+) = 3-oxo-dotriacontanoyl-CoA + CO2 + CoA. It carries out the reaction (19Z,22Z,25Z,28Z,31Z)-tetratriacontapentaenoyl-CoA + malonyl-CoA + H(+) = 3-oxo-(21Z,24Z,27Z,30Z,33Z)-hexatriacontapentaenoyl-CoA + CO2 + CoA. The catalysed reaction is (4Z,7Z,10Z,13Z,16Z,19Z)-docosahexaenoyl-CoA + malonyl-CoA + H(+) = 3-oxo-(6Z,9Z,12Z,15Z,18Z,21Z)-tetracosahexaenoyl-CoA + CO2 + CoA. It catalyses the reaction (7Z,10Z,13Z,16Z)-docosatetraenoyl-CoA + malonyl-CoA + H(+) = (9Z,12Z,15Z,18Z)-3-oxotetracosatetraenoyl-CoA + CO2 + CoA. The enzyme catalyses (11Z,14Z,17Z,20Z,23Z)-hexacosapentaenoyl-CoA + malonyl-CoA + H(+) = 3-oxo-(13Z,16Z,19Z,22Z,25Z)-octacosapentaenoyl-CoA + CO2 + CoA. It carries out the reaction (13Z,16Z,19Z,22Z,25Z)-octacosapentaenoyl-CoA + malonyl-CoA + H(+) = 3-oxo-(15Z,18Z,21Z,24Z,27Z)-triacontapentaenoyl-CoA + CO2 + CoA. The catalysed reaction is (15Z,18Z,21Z,24Z,27Z)-triacontapentaenoyl-CoA + malonyl-CoA + H(+) = 3-oxo-(17Z,20Z,23Z,26Z,29Z)-dotriacontapentaenoyl-CoA + CO2 + CoA. It catalyses the reaction (17Z,20Z,23Z,26Z,29Z)-dotriacontapentaenoyl-CoA + malonyl-CoA + H(+) = 3-oxo-(19Z,22Z,25Z,28Z,31Z)-tetratriacontapentaenoyl-CoA + CO2 + CoA. The enzyme catalyses (21Z,24Z,27Z,30Z,33Z)-hexatriacontapentaenoyl-CoA + malonyl-CoA + H(+) = 3-oxo-(23Z,26Z,29Z,32Z,35Z)-octatriacontapentaenoyl-CoA + CO2 + CoA. It carries out the reaction (11Z,14Z,17Z,20Z)-hexacosatetraenoyl-CoA + malonyl-CoA + H(+) = (13Z,16Z,19Z,22Z)-3-oxooctacosatetraenoyl-CoA + CO2 + CoA. The catalysed reaction is (13Z,16Z,19Z,22Z)-octacosatetraenoyl-CoA + malonyl-CoA + H(+) = 3-oxo-(15Z,18Z,21Z,24Z)-triacontatetraenoyl-CoA + CO2 + CoA. It catalyses the reaction (15Z,18Z,21Z,24Z)-triacontatetraenoyl-CoA + malonyl-CoA + H(+) = 3-oxo-(17Z,20Z,23Z,26Z)-dotriacontatetraenoyl-CoA + CO2 + CoA. The enzyme catalyses (17Z,20Z,23Z,26Z)-dotriacontatetraenoyl-CoA + malonyl-CoA + H(+) = 3-oxo-(19Z,22Z,25Z,28Z)-tetratriacontatetraenoyl-CoA + CO2 + CoA. It carries out the reaction (19Z,22Z,25Z,28Z)-tetratriacontatetraenoyl-CoA + malonyl-CoA + H(+) = 3-oxo-(21Z,24Z,27Z,30Z)-hexatriacontatetraenoyl-CoA + CO2 + CoA. The catalysed reaction is (21Z,24Z,27Z,30Z)-hexatriacontatetraenoyl-CoA + malonyl-CoA + H(+) = 3-oxo-(23Z,26Z,29Z,32Z)-octatriacontatetraenoyl-CoA + CO2 + CoA. It catalyses the reaction (6Z,9Z,12Z,15Z,18Z,21Z)-tetracosahexaenoyl-CoA + malonyl-CoA + H(+) = 3-oxo-(8Z,11Z,14Z,17Z,20Z,23Z)-hexacosahexaenoyl-CoA + CO2 + CoA. The enzyme catalyses (8Z,11Z,14Z,17Z,20Z,23Z)-hexacosahexaenoyl-CoA + malonyl-CoA + H(+) = 3-oxo-(10Z,13Z,16Z,19Z,22Z,25Z)-octacosahexaenoyl-CoA + CO2 + CoA. It carries out the reaction (10Z,13Z,16Z,19Z,22Z,25Z)-octacosahexaenoyl-CoA + malonyl-CoA + H(+) = 3-oxo-(12Z,15Z,18Z,21Z,24Z,27Z)-triacontahexaenoyl-CoA + CO2 + CoA. The catalysed reaction is (12Z,15Z,18Z,21Z,24Z,27Z)-triacontahexaenoyl-CoA + malonyl-CoA + H(+) = 3-oxo-(14Z,17Z,20Z,23Z,26Z,29Z)-dotriacontahexaenoyl-CoA + CO2 + CoA. It catalyses the reaction (14Z,17Z,20Z,23Z,26Z,29Z)-dotriacontahexaenoyl-CoA + malonyl-CoA + H(+) = 3-oxo-(16Z,19Z,22Z,25Z,28Z,31Z)-tetratriacontahexaenoyl-CoA + CO2 + CoA. The enzyme catalyses (16Z,19Z,22Z,25Z,28Z,31Z)-tetratriacontahexaenoyl-CoA + malonyl-CoA + H(+) = 3-oxo-(18Z,21Z,24Z,27Z,30Z,33Z)-hexatriacontahexaenoyl-CoA + CO2 + CoA. It carries out the reaction (9Z,12Z,15Z,18Z,21Z)-tetracosapentaenoyl-CoA + malonyl-CoA + H(+) = 3-oxo-(11Z,14Z,17Z,20Z,23Z)-hexacosapentaenoyl-CoA + CO2 + CoA. It functions in the pathway lipid metabolism; fatty acid biosynthesis. Its function is as follows. Catalyzes the first and rate-limiting reaction of the four reactions that constitute the long-chain fatty acids elongation cycle. This endoplasmic reticulum-bound enzymatic process allows the addition of 2 carbons to the chain of long- and very long-chain fatty acids (VLCFAs) per cycle. Condensing enzyme that catalyzes the synthesis of very long chain saturated (VLC-SFA) and polyunsaturated (PUFA) fatty acids that are involved in multiple biological processes as precursors of membrane lipids and lipid mediators. May play a critical role in early brain and skin development. The protein is Very long chain fatty acid elongase 4 of Mus musculus (Mouse).